Here is a 230-residue protein sequence, read N- to C-terminus: Fibrillarin-like rRNA/tRNA 2'-O-methyltransferase (230 aa).

S-adenosyl-L-methionine is bound by residues threonine 87 to threonine 88, glutamate 105 to phenylalanine 106, aspartate 130 to alanine 131, and aspartate 150 to glutamine 153.

It belongs to the methyltransferase superfamily. Fibrillarin family. Interacts with nop5. Component of box C/D small ribonucleoprotein (sRNP) particles that contain rpl7ae, FlpA and nop5, plus a guide RNA.

Involved in pre-rRNA and tRNA processing. Utilizes the methyl donor S-adenosyl-L-methionine to catalyze the site-specific 2'-hydroxyl methylation of ribose moieties in rRNA and tRNA. Site specificity is provided by a guide RNA that base pairs with the substrate. Methylation occurs at a characteristic distance from the sequence involved in base pairing with the guide RNA. The chain is Fibrillarin-like rRNA/tRNA 2'-O-methyltransferase from Methanococcus maripaludis (strain DSM 14266 / JCM 13030 / NBRC 101832 / S2 / LL).